Here is a 446-residue protein sequence, read N- to C-terminus: MEGIILAAGKGTRMKSDLPKVVHEVAEKPMVLRVYEALVGAGVKRVVAVVGYRKEKVEEILRGRAVIAVQEEQLGTGHAALVAMPYVEDENVIIVPGDTPLLKASTLQALIKKHLETGAYATVLTCFLSNPYGYGRIVRDGYGKIIKIVEEKDATLEEKQIAEVNTGIYCFNTKILKEILPLLKAENAQKEYYLTDVIPLLLERGKVVETITIQDETEVYGVNDRVQLARLTKGVYRRKAEALMQEGVTIIDPETVYIGEEVVVGSDTVIYPNTYLEGKTVIGSGCRLGPNTRITDSVIGNNTEITFSVIIQARVGDEVNVGPFAYLRPGTEIANGVKIGDFVEIKKSFIGEGSKVPHLSYIGDAVVGKGVNIGAGTITCNYDGKNKWETVIEDGAFIGSNTNLVAPIKIGKNAVVGAGSTLTEDVPEKALAIARSRQVNKEDYVK.

The segment at 1–225 (MEGIILAAGK…ETEVYGVNDR (225 aa)) is pyrophosphorylase. UDP-N-acetyl-alpha-D-glucosamine is bound by residues 6-9 (LAAG), Lys20, Gln70, and 75-76 (GT). Asp98 lines the Mg(2+) pocket. 4 residues coordinate UDP-N-acetyl-alpha-D-glucosamine: Gly135, Glu150, Asn165, and Asn223. Asn223 lines the Mg(2+) pocket. Positions 226–246 (VQLARLTKGVYRRKAEALMQE) are linker. An N-acetyltransferase region spans residues 247-446 (GVTIIDPETV…RQVNKEDYVK (200 aa)). UDP-N-acetyl-alpha-D-glucosamine is bound by residues Arg328 and Lys346. The active-site Proton acceptor is His358. The UDP-N-acetyl-alpha-D-glucosamine site is built by Tyr361 and Asn372. Acetyl-CoA contacts are provided by residues Ala375, 381–382 (NY), Ser400, Ala418, and Arg435.

This sequence in the N-terminal section; belongs to the N-acetylglucosamine-1-phosphate uridyltransferase family. The protein in the C-terminal section; belongs to the transferase hexapeptide repeat family. In terms of assembly, homotrimer. Requires Mg(2+) as cofactor.

Its subcellular location is the cytoplasm. It catalyses the reaction alpha-D-glucosamine 1-phosphate + acetyl-CoA = N-acetyl-alpha-D-glucosamine 1-phosphate + CoA + H(+). The catalysed reaction is N-acetyl-alpha-D-glucosamine 1-phosphate + UTP + H(+) = UDP-N-acetyl-alpha-D-glucosamine + diphosphate. The protein operates within nucleotide-sugar biosynthesis; UDP-N-acetyl-alpha-D-glucosamine biosynthesis; N-acetyl-alpha-D-glucosamine 1-phosphate from alpha-D-glucosamine 6-phosphate (route II): step 2/2. It functions in the pathway nucleotide-sugar biosynthesis; UDP-N-acetyl-alpha-D-glucosamine biosynthesis; UDP-N-acetyl-alpha-D-glucosamine from N-acetyl-alpha-D-glucosamine 1-phosphate: step 1/1. It participates in bacterial outer membrane biogenesis; LPS lipid A biosynthesis. Its function is as follows. Catalyzes the last two sequential reactions in the de novo biosynthetic pathway for UDP-N-acetylglucosamine (UDP-GlcNAc). The C-terminal domain catalyzes the transfer of acetyl group from acetyl coenzyme A to glucosamine-1-phosphate (GlcN-1-P) to produce N-acetylglucosamine-1-phosphate (GlcNAc-1-P), which is converted into UDP-GlcNAc by the transfer of uridine 5-monophosphate (from uridine 5-triphosphate), a reaction catalyzed by the N-terminal domain. This chain is Bifunctional protein GlmU, found in Carboxydothermus hydrogenoformans (strain ATCC BAA-161 / DSM 6008 / Z-2901).